The chain runs to 743 residues: TSL-kinase interacting protein 1 (743 aa).

In terms of domain architecture, SANT spans 53-104 (RQWAAWTHQEEESFFTALRQVGKNFEKITSRVQSKNKDQVRHYYYRLVRRMN). Disordered stretches follow at residues 486–523 (SGVH…PGEW) and 626–679 (SPKG…TPCG). A compositionally biased stretch (basic and acidic residues) spans 488–499 (VHDRPARSRDDY).

Interacts only with active kinase forms of TOUSLED. Interacts with SNL1. Phosphorylated in vitro by TOUSLED. In terms of tissue distribution, expressed in flowers, roots and leaves.

Its subcellular location is the nucleus. This is TSL-kinase interacting protein 1 (TKI1) from Arabidopsis thaliana (Mouse-ear cress).